A 174-amino-acid chain; its full sequence is MKTFVLGGGCFWCLDAVYQKTKGVTAVVSGYTGGHDPYPDYYSVCSGTTGHAEVVAVTFDEEIIPAEVILDMFFALHDPTTLNRQGYDVGTQYRSSMFYETTEEKILFEEAIDRNQALWSHPIVTEVSRLPRFHVAEEFHQDYYAKHPEQGYCQVIINPKLAKARKYYSAWLNA.

The active site involves C10.

The protein belongs to the MsrA Met sulfoxide reductase family.

It carries out the reaction L-methionyl-[protein] + [thioredoxin]-disulfide + H2O = L-methionyl-(S)-S-oxide-[protein] + [thioredoxin]-dithiol. The catalysed reaction is [thioredoxin]-disulfide + L-methionine + H2O = L-methionine (S)-S-oxide + [thioredoxin]-dithiol. Has an important function as a repair enzyme for proteins that have been inactivated by oxidation. Catalyzes the reversible oxidation-reduction of methionine sulfoxide in proteins to methionine. This chain is Peptide methionine sulfoxide reductase MsrA, found in Pseudarthrobacter chlorophenolicus (strain ATCC 700700 / DSM 12829 / CIP 107037 / JCM 12360 / KCTC 9906 / NCIMB 13794 / A6) (Arthrobacter chlorophenolicus).